Here is a 134-residue protein sequence, read N- to C-terminus: Phosphoribosyl-ATP pyrophosphatase (134 aa).

The protein belongs to the PRA-PH family.

The protein localises to the cytoplasm. It catalyses the reaction 1-(5-phospho-beta-D-ribosyl)-ATP + H2O = 1-(5-phospho-beta-D-ribosyl)-5'-AMP + diphosphate + H(+). The protein operates within amino-acid biosynthesis; L-histidine biosynthesis; L-histidine from 5-phospho-alpha-D-ribose 1-diphosphate: step 2/9. The chain is Phosphoribosyl-ATP pyrophosphatase from Verminephrobacter eiseniae (strain EF01-2).